We begin with the raw amino-acid sequence, 368 residues long: Glutamate 5-kinase (368 aa).

K9 contributes to the ATP binding site. S49, D136, and N148 together coordinate substrate. Residues 168–169 (TD) and 210–216 (TGGMMTK) each bind ATP. The PUA domain occupies 275-353 (AGIITIDDGA…ADIENVLGYE (79 aa)).

It belongs to the glutamate 5-kinase family.

It is found in the cytoplasm. It carries out the reaction L-glutamate + ATP = L-glutamyl 5-phosphate + ADP. It participates in amino-acid biosynthesis; L-proline biosynthesis; L-glutamate 5-semialdehyde from L-glutamate: step 1/2. Catalyzes the transfer of a phosphate group to glutamate to form L-glutamate 5-phosphate. This chain is Glutamate 5-kinase, found in Haemophilus influenzae (strain 86-028NP).